The following is a 177-amino-acid chain: Probable inosine/xanthosine triphosphatase (177 aa).

This sequence belongs to the YjjX NTPase family. In terms of assembly, homodimer. Mg(2+) is required as a cofactor. Mn(2+) serves as cofactor.

It catalyses the reaction XTP + H2O = XDP + phosphate + H(+). The catalysed reaction is ITP + H2O = IDP + phosphate + H(+). Its function is as follows. Phosphatase that hydrolyzes non-canonical purine nucleotides such as XTP and ITP to their respective diphosphate derivatives. Probably excludes non-canonical purines from DNA/RNA precursor pool, thus preventing their incorporation into DNA/RNA and avoiding chromosomal lesions. The sequence is that of Probable inosine/xanthosine triphosphatase from Pyrobaculum islandicum (strain DSM 4184 / JCM 9189 / GEO3).